The chain runs to 224 residues: Response regulator protein GraR (224 aa).

Positions 2–115 constitute a Response regulatory domain; the sequence is QILLVEDDNT…VLIAKLQAIY (114 aa). Aspartate 51 is modified (4-aspartylphosphate). The ompR/PhoB-type DNA-binding region spans 126–224; sequence KRTLSWQDAT…KVGKGYLAHE (99 aa).

Phosphorylated by GraS.

The protein localises to the cytoplasm. Its function is as follows. Member of the two-component regulatory system GraR/GraS involved in resistance against cationic antimicrobial peptides (CAMPs). This is Response regulator protein GraR (graR) from Staphylococcus epidermidis (strain ATCC 35984 / DSM 28319 / BCRC 17069 / CCUG 31568 / BM 3577 / RP62A).